The sequence spans 357 residues: UDP-N-acetylglucosamine--N-acetylmuramyl-(pentapeptide) pyrophosphoryl-undecaprenol N-acetylglucosamine transferase (357 aa).

UDP-N-acetyl-alpha-D-glucosamine-binding positions include 13–15, Asn125, Arg161, Ser189, Ile243, and Gln288; that span reads TGG.

It belongs to the glycosyltransferase 28 family. MurG subfamily.

It localises to the cell inner membrane. It carries out the reaction di-trans,octa-cis-undecaprenyl diphospho-N-acetyl-alpha-D-muramoyl-L-alanyl-D-glutamyl-meso-2,6-diaminopimeloyl-D-alanyl-D-alanine + UDP-N-acetyl-alpha-D-glucosamine = di-trans,octa-cis-undecaprenyl diphospho-[N-acetyl-alpha-D-glucosaminyl-(1-&gt;4)]-N-acetyl-alpha-D-muramoyl-L-alanyl-D-glutamyl-meso-2,6-diaminopimeloyl-D-alanyl-D-alanine + UDP + H(+). It participates in cell wall biogenesis; peptidoglycan biosynthesis. In terms of biological role, cell wall formation. Catalyzes the transfer of a GlcNAc subunit on undecaprenyl-pyrophosphoryl-MurNAc-pentapeptide (lipid intermediate I) to form undecaprenyl-pyrophosphoryl-MurNAc-(pentapeptide)GlcNAc (lipid intermediate II). In Polynucleobacter asymbioticus (strain DSM 18221 / CIP 109841 / QLW-P1DMWA-1) (Polynucleobacter necessarius subsp. asymbioticus), this protein is UDP-N-acetylglucosamine--N-acetylmuramyl-(pentapeptide) pyrophosphoryl-undecaprenol N-acetylglucosamine transferase.